The primary structure comprises 201 residues: Small ribosomal subunit protein uS4 (201 aa).

One can recognise an S4 RNA-binding domain in the interval 93–153 (ARLDNVVYRM…EKSKSLEAID (61 aa)).

It belongs to the universal ribosomal protein uS4 family. In terms of assembly, part of the 30S ribosomal subunit. Contacts protein S5. The interaction surface between S4 and S5 is involved in control of translational fidelity.

Its function is as follows. One of the primary rRNA binding proteins, it binds directly to 16S rRNA where it nucleates assembly of the body of the 30S subunit. In terms of biological role, with S5 and S12 plays an important role in translational accuracy. In Flavobacterium psychrophilum (strain ATCC 49511 / DSM 21280 / CIP 103535 / JIP02/86), this protein is Small ribosomal subunit protein uS4.